The primary structure comprises 220 residues: Type II restriction enzyme NspV (220 aa).

It catalyses the reaction Endonucleolytic cleavage of DNA to give specific double-stranded fragments with terminal 5'-phosphates.. Its function is as follows. A P subtype restriction enzyme that recognizes the double-stranded sequence 5'-TTCGAA-3' and cleaves after T-2. This Nostoc sp. (strain ATCC 29411 / PCC 7524) protein is Type II restriction enzyme NspV.